The chain runs to 61 residues: Sperm protamine P1 (61 aa).

Residues 1–61 (MARFRRSRSR…RSSRRSRRRN (61 aa)) form a disordered region.

This sequence belongs to the protamine P1 family. As to expression, testis.

It is found in the nucleus. Its subcellular location is the chromosome. Its function is as follows. Protamines substitute for histones in the chromatin of sperm during the haploid phase of spermatogenesis. They compact sperm DNA into a highly condensed, stable and inactive complex. The chain is Sperm protamine P1 (PRM1) from Ornithorhynchus anatinus (Duckbill platypus).